Here is a 233-residue protein sequence, read N- to C-terminus: Ribosomal RNA small subunit methyltransferase G (233 aa).

S-adenosyl-L-methionine is bound by residues glycine 96, leucine 101, 146–147 (LE), and arginine 160.

The protein belongs to the methyltransferase superfamily. RNA methyltransferase RsmG family.

It is found in the cytoplasm. The catalysed reaction is guanosine(527) in 16S rRNA + S-adenosyl-L-methionine = N(7)-methylguanosine(527) in 16S rRNA + S-adenosyl-L-homocysteine. In terms of biological role, specifically methylates the N7 position of guanine in position 527 of 16S rRNA. This is Ribosomal RNA small subunit methyltransferase G from Sphingopyxis alaskensis (strain DSM 13593 / LMG 18877 / RB2256) (Sphingomonas alaskensis).